A 732-amino-acid polypeptide reads, in one-letter code: Coagulation factor XIII A chain (732 aa).

The disordered stretch occupies residues 1 to 26 (MSDTPASTFGGRRAVPPNNSNAAEVD). An N-acetylserine modification is found at serine 2. Residues 2–38 (SDTPASTFGGRRAVPPNNSNAAEVDLPTEELQGLVPR) constitute a propeptide, activation peptide. Active-site residues include cysteine 315, histidine 374, and aspartate 397. 4 residues coordinate Ca(2+): asparagine 437, aspartate 439, glutamate 486, and glutamate 491. N-linked (GlcNAc...) asparagine glycosylation is present at asparagine 614.

Belongs to the transglutaminase superfamily. Transglutaminase family. As to quaternary structure, tetramer of two A chains (F13A1) and two B (F13B) chains. It depends on Ca(2+) as a cofactor. Post-translationally, the activation peptide is released by thrombin.

The protein resides in the cytoplasm. It localises to the secreted. The catalysed reaction is L-glutaminyl-[protein] + L-lysyl-[protein] = [protein]-L-lysyl-N(6)-5-L-glutamyl-[protein] + NH4(+). In terms of biological role, factor XIII is activated by thrombin and calcium ion to a transglutaminase that catalyzes the formation of gamma-glutamyl-epsilon-lysine cross-links between fibrin chains, thus stabilizing the fibrin clot. Also cross-link alpha-2-plasmin inhibitor, or fibronectin, to the alpha chains of fibrin. The polypeptide is Coagulation factor XIII A chain (F13a1) (Mus musculus (Mouse)).